Here is a 96-residue protein sequence, read N- to C-terminus: MLRLDLQFFASKKGVGSTKNGRDSQSKRLGAKRADGQTVSGGSILYRQRGTKIYPGVNVGRGGDDTLYAKVDGVVRFERLGRDRKQVSVYPVAQEA.

A propeptide spanning residues 1 to 9 (MLRLDLQFF) is cleaved from the precursor. The segment at 14–36 (GVGSTKNGRDSQSKRLGAKRADG) is disordered.

Belongs to the bacterial ribosomal protein bL27 family. Post-translationally, the N-terminus is cleaved by ribosomal processing cysteine protease Prp.

This is Large ribosomal subunit protein bL27 from Bacillus anthracis (strain A0248).